Reading from the N-terminus, the 204-residue chain is Holliday junction branch migration complex subunit RuvA (204 aa).

A domain I region spans residues 1–64; sequence MIGRLRGVVI…EDAQLLYGFN (64 aa). A domain II region spans residues 65-143; the sequence is HKQERALFRE…GWVSHDLFSP (79 aa). A flexible linker region spans residues 144-155; it reads AEISLPARESVL. Positions 156-204 are domain III; sequence RAPDSSEEAASALVALGYKPQQASQIVSKIAKEGMSVEDIIRESLRSLV.

Belongs to the RuvA family. In terms of assembly, homotetramer. Forms an RuvA(8)-RuvB(12)-Holliday junction (HJ) complex. HJ DNA is sandwiched between 2 RuvA tetramers; dsDNA enters through RuvA and exits via RuvB. An RuvB hexamer assembles on each DNA strand where it exits the tetramer. Each RuvB hexamer is contacted by two RuvA subunits (via domain III) on 2 adjacent RuvB subunits; this complex drives branch migration. In the full resolvosome a probable DNA-RuvA(4)-RuvB(12)-RuvC(2) complex forms which resolves the HJ.

The protein localises to the cytoplasm. In terms of biological role, the RuvA-RuvB-RuvC complex processes Holliday junction (HJ) DNA during genetic recombination and DNA repair, while the RuvA-RuvB complex plays an important role in the rescue of blocked DNA replication forks via replication fork reversal (RFR). RuvA specifically binds to HJ cruciform DNA, conferring on it an open structure. The RuvB hexamer acts as an ATP-dependent pump, pulling dsDNA into and through the RuvAB complex. HJ branch migration allows RuvC to scan DNA until it finds its consensus sequence, where it cleaves and resolves the cruciform DNA. This is Holliday junction branch migration complex subunit RuvA from Aeromonas salmonicida (strain A449).